A 233-amino-acid polypeptide reads, in one-letter code: Large ribosomal subunit protein uL1 (233 aa).

Belongs to the universal ribosomal protein uL1 family. In terms of assembly, part of the 50S ribosomal subunit.

In terms of biological role, binds directly to 23S rRNA. The L1 stalk is quite mobile in the ribosome, and is involved in E site tRNA release. Its function is as follows. Protein L1 is also a translational repressor protein, it controls the translation of the L11 operon by binding to its mRNA. The sequence is that of Large ribosomal subunit protein uL1 from Proteus mirabilis (strain HI4320).